We begin with the raw amino-acid sequence, 548 residues long: ComP-specific O-oligosaccharyltransferase (548 aa).

12 helical membrane-spanning segments follow: residues 8 to 28 (IKNYTIVSGVFFLGSAFIIPN), 32 to 52 (LSSTLYKELIAVLGLLILLTV), 68 to 88 (WFLFVIFIIFIQLIVGEIYFF), 91 to 111 (FFFSISFLVILFLSFLLGFNE), 119 to 139 (IVKKIAWIFIIVVQISFLIAI), 164 to 184 (LGQPNQFSTLILITLFLLCYL), 189 to 209 (SLNNMVFNILSFCLIFANVMT), 213 to 233 (SAWISVILISLLYLLKFQKKI), 239 to 259 (IFFNIVFWTLVYCVPLLFNLI), 331 to 351 (MLWNGFFIGLIISILILCFLI), 363 to 383 (LFLFFCVVAFFVHCLLEYPFA), and 418 to 438 (TLFLGCCWLGYVAFWVEVLDI).

The protein belongs to the PglL O-oligosaccharyltransferase family.

It is found in the cell membrane. Its function is as follows. Specifically catalyzes the glycosylation of the pilin-like competence factor ComP. This is ComP-specific O-oligosaccharyltransferase from Acinetobacter baylyi (strain ATCC 33305 / BD413 / ADP1).